The primary structure comprises 468 residues: Ribulose bisphosphate carboxylase large chain (468 aa).

N6,N6,N6-trimethyllysine is present on Lys-5. Residues Asn-114 and Thr-164 each coordinate substrate. Lys-166 functions as the Proton acceptor in the catalytic mechanism. Residue Lys-168 participates in substrate binding. Residues Lys-192, Asp-194, and Glu-195 each coordinate Mg(2+). At Lys-192 the chain carries N6-carboxylysine. Residue His-285 is the Proton acceptor of the active site. Arg-286, His-318, and Ser-370 together coordinate substrate.

It belongs to the RuBisCO large chain family. Type I subfamily. Heterohexadecamer of 8 large chains and 8 small chains; disulfide-linked. The disulfide link is formed within the large subunit homodimers. Mg(2+) is required as a cofactor. Post-translationally, the disulfide bond which can form in the large chain dimeric partners within the hexadecamer appears to be associated with oxidative stress and protein turnover.

It is found in the plastid. The protein resides in the chloroplast. The enzyme catalyses 2 (2R)-3-phosphoglycerate + 2 H(+) = D-ribulose 1,5-bisphosphate + CO2 + H2O. It catalyses the reaction D-ribulose 1,5-bisphosphate + O2 = 2-phosphoglycolate + (2R)-3-phosphoglycerate + 2 H(+). RuBisCO catalyzes two reactions: the carboxylation of D-ribulose 1,5-bisphosphate, the primary event in carbon dioxide fixation, as well as the oxidative fragmentation of the pentose substrate in the photorespiration process. Both reactions occur simultaneously and in competition at the same active site. The polypeptide is Ribulose bisphosphate carboxylase large chain (Datura stramonium (Jimsonweed)).